Consider the following 491-residue polypeptide: Transmembrane protein 200A (491 aa).

Over 1–61 (MIATGGVITG…RGKIRLYSPS (61 aa)) the chain is Cytoplasmic. The interval 16 to 41 (RQDSARSQQHVNLSPSPATQEKKPIR) is disordered. Over residues 20-34 (ARSQQHVNLSPSPAT) the composition is skewed to polar residues. The chain crosses the membrane as a helical span at residues 62-82 (GFFLILGVLISIIGIAMAVLG). Residues 83 to 126 (YWPQKEHFIDAETTLSTNETQVIRNEGGVVVRFFEQHLHSDKMK) are Extracellular-facing. Asn100 carries N-linked (GlcNAc...) asparagine glycosylation. A helical membrane pass occupies residues 127-147 (MLGPFTMGIGIFIFICANAIL). Residues 148 to 491 (HENRDKETKI…LKRGTSETRF (344 aa)) lie on the Cytoplasmic side of the membrane. Ser350 is subject to Phosphoserine.

This sequence belongs to the TMEM200 family. Expressed in cerebellum.

The protein localises to the membrane. This Homo sapiens (Human) protein is Transmembrane protein 200A (TMEM200A).